We begin with the raw amino-acid sequence, 90 residues long: DNA-directed RNA polymerase subunit omega (90 aa).

The protein belongs to the RNA polymerase subunit omega family. In terms of assembly, the RNAP catalytic core consists of 2 alpha, 1 beta, 1 beta' and 1 omega subunit. When a sigma factor is associated with the core the holoenzyme is formed, which can initiate transcription.

It catalyses the reaction RNA(n) + a ribonucleoside 5'-triphosphate = RNA(n+1) + diphosphate. Its function is as follows. Promotes RNA polymerase assembly. Latches the N- and C-terminal regions of the beta' subunit thereby facilitating its interaction with the beta and alpha subunits. In Alteromonas mediterranea (strain DSM 17117 / CIP 110805 / LMG 28347 / Deep ecotype), this protein is DNA-directed RNA polymerase subunit omega.